The primary structure comprises 203 residues: Small ribosomal subunit protein uS4c (203 aa).

The S4 RNA-binding domain maps to 89 to 152 (MRLDNILFRL…QSRTLIQNSL (64 aa)).

It belongs to the universal ribosomal protein uS4 family. Part of the 30S ribosomal subunit. Contacts protein S5. The interaction surface between S4 and S5 is involved in control of translational fidelity.

The protein resides in the plastid. In terms of biological role, one of the primary rRNA binding proteins, it binds directly to 16S rRNA where it nucleates assembly of the body of the 30S subunit. With S5 and S12 plays an important role in translational accuracy. In Orobanche minor (Small broomrape), this protein is Small ribosomal subunit protein uS4c (rps4).